Here is a 365-residue protein sequence, read N- to C-terminus: MDESLEHQTQTHDQESEIVTEGSAVVHSEPSQEGNVPPKVDSEAEVLDEKVSKQIIKEGHGSKPSKYSTCFLHYRAWTKNSQHKFEDTWHEQQPIELVLGKEKKELAGLAIGVASMKSGERALVHVGWELAYGKEGNFSFPNVPPMADLLYEVEVIGFDETKEGKARSDMTVEERIGAADRRKMDGNSLFKEEKLEEAMQQYEMAIAYMGDDFMFQLYGKYQDMALAVKNPCHLNIAACLIKLKRYDEAIGHCNIVLTEEEKNPKALFRRGKAKAELGQMDSARDDFRKAQKYAPDDKAIRRELRALAEQEKALYQKQKEMYKGIFKGKDEGGAKSKSLFWLIVLWQWFVSLFSRIFRRHRVKAD.

The span at 1 to 15 (MDESLEHQTQTHDQE) shows a compositional bias: basic and acidic residues. The tract at residues 1–44 (MDESLEHQTQTHDQESEIVTEGSAVVHSEPSQEGNVPPKVDSEA) is disordered. Residues 1–163 (MDESLEHQTQ…EVIGFDETKE (163 aa)) are interaction with MDR1/PGP1. The region spanning 67-159 (YSTCFLHYRA…LYEVEVIGFD (93 aa)) is the PPIase FKBP-type domain. The tract at residues 163–337 (EGKARSDMTV…GKDEGGAKSK (175 aa)) is interaction with MRP1. TPR repeat units lie at residues 179–212 (ADRR…MGDD), 230–263 (NPCH…EEKN), and 264–297 (PKAL…APDD). The calmodulin-binding stretch occupies residues 310-326 (QEKALYQKQKEMYKGIF). Residues 338-357 (SLFWLIVLWQWFVSLFSRIF) traverse the membrane as a helical; Anchor for type IV membrane protein segment.

It belongs to the FKBP-type PPIase family. In terms of assembly, interacts with calmodulin (CaM), MRP1, MRP2, MDR1/PGP1, MDR11/PGP19 and SHD/HSP90. Interacts with 1-naphthylphthalamic acid (NPA).

The protein localises to the cell membrane. Its subcellular location is the vacuole membrane. The protein resides in the endoplasmic reticulum. The enzyme catalyses [protein]-peptidylproline (omega=180) = [protein]-peptidylproline (omega=0). Its function is as follows. PPIases accelerate the folding of proteins. It catalyzes the cis-trans isomerization of proline imidic peptide bonds in oligopeptides. Modulates the uptake of MRP substrates into the vacuole; reduces metolachlor-GS (MOC-GS) and enhances 17-beta-estradiol 17-(beta-D-glucuronide) (E(2)17betaG) uptake. Regulates cell elongation and orientation. Functions as a positive regulator of PGP1-mediated auxin transport. Confers drug modulation of PGP1 efflux activity as interaction with NPA or flavonol quercetin prevents its physical and functional interaction with PGP1. Required for the proper localization of auxin-related ABCB transporters. Plays a role in brassinosteroid (BR) signaling pathway. Required for seed development by promoting stamen elongation and, to a lesser extent, anther dehiscence and pollen maturation, probably as a chaperone helping ABCB1 and ABCB19 auxin transporters localization and activation. Involved in auxin signaling in nectaries to promote starch accumulation to attract visiting pollinators. This Arabidopsis thaliana (Mouse-ear cress) protein is Peptidyl-prolyl cis-trans isomerase FKBP42.